Reading from the N-terminus, the 185-residue chain is Ribosome-recycling factor (185 aa).

This sequence belongs to the RRF family.

It localises to the cytoplasm. In terms of biological role, responsible for the release of ribosomes from messenger RNA at the termination of protein biosynthesis. May increase the efficiency of translation by recycling ribosomes from one round of translation to another. The sequence is that of Ribosome-recycling factor from Bacillus mycoides (strain KBAB4) (Bacillus weihenstephanensis).